The following is a 740-amino-acid chain: MAFFSPWKLSSQKLGFFLVTFGFIWGMMLLHFTIQQRTQPESSSMLREQILDLSKRYIKALAEENRNVVDGPYAGVMTAYDLKKTLAVLLDNILQRIGKLESKVDNLVNGTGANSTNSTTAVPSLVSLEKINVADIINGVQEKCVLPPMDGYPHCEGKIKWMKDMWRSDPCYADYGVDGTSCSFFIYLSEVENWCPRLPWRAKNPYEEADHNSLAEIRTDFNILYGMMKKHEEFRWMRLRIRRMADAWIQAIKSLAEKQNLEKRKRKKILVHLGLLTKESGFKIAETAFSGGPLGELVQWSDLITSLYLLGHDIRISASLAELKEIMKKVVGNRSGCPTVGDRIVELIYIDIVGLAQFKKTLGPSWVHYQCMLRVLDSFGTEPEFNHASYAQSKGHKTPWGKWNLNPQQFYTMFPHTPDNSFLGFVVEQHLNSSDIHHINEIKRQNQSLVYGKVDSFWKNKKIYLDIIHTYMEVHATVYGSSTKNIPSYVKNHGILSGRDLQFLLRETKLFVGLGFPYEGPAPLEAIANGCAFLNPKFNPPKSSKNTDFFIGKPTLRELTSQHPYAEVFIGRPHVWTVDLNNREEVEDAVKAILNQKIEPYMPYEFTCEGMLQRINAFIEKQDFCHGQVMWPPLSALQVKLAEPGQSCKQVCQESQLICEPSFFQHLNKEKDLLKYKVICQSSELYKDILVPSFYPKSKHCVFQGDLLLFSCAGAHPTHQRICPCRDFIKGQVALCKDCL.

Topologically, residues 1-13 (MAFFSPWKLSSQK) are cytoplasmic. A helical; Signal-anchor for type II membrane protein membrane pass occupies residues 14–30 (LGFFLVTFGFIWGMMLL). Residues 31 to 740 (HFTIQQRTQP…GQVALCKDCL (710 aa)) lie on the Lumenal side of the membrane. N109, N114, and N117 each carry an N-linked (GlcNAc...) asparagine glycan. 9 cysteine pairs are disulfide-bonded: C144/C182, C155/C195, C171/C337, C371/C625, C648/C723, C652/C725, C659/C712, C680/C701, and C736/C739. A sufficient for catalytic activity region spans residues 212–740 (NSLAEIRTDF…GQVALCKDCL (529 aa)). Residue N333 is glycosylated (N-linked (GlcNAc...) asparagine). Residue 377 to 378 (DS) participates in substrate binding. N-linked (GlcNAc...) asparagine glycosylation is found at N432 and N446. UDP-N-acetyl-alpha-D-glucosamine is bound at residue E525. K553 contacts substrate.

Belongs to the glycosyltransferase 18 family. N-glycosylated. In terms of processing, a secreted form is released from the membrane after cleavage by gamma-secretase. Detected in kidney (at protein level). Detected in kidney.

It localises to the golgi apparatus membrane. The protein resides in the secreted. The enzyme catalyses N(4)-{beta-D-GlcNAc-(1-&gt;2)-[beta-D-GlcNAc-(1-&gt;4)]-alpha-D-Man-(1-&gt;3)-[beta-D-GlcNAc-(1-&gt;2)-alpha-D-Man-(1-&gt;6)]-beta-D-Man-(1-&gt;4)-beta-D-GlcNAc-(1-&gt;4)-beta-D-GlcNAc}-L-asparaginyl-[protein] + UDP-N-acetyl-alpha-D-glucosamine = N(4)-{beta-D-GlcNAc-(1-&gt;2)-[beta-D-GlcNAc-(1-&gt;4)]-alpha-D-Man-(1-&gt;3)-[beta-D-GlcNAc-(1-&gt;2)-[beta-D-GlcNAc-(1-&gt;6)]-alpha-D-Man-(1-&gt;6)]-beta-D-Man-(1-&gt;4)-beta-D-GlcNAc-(1-&gt;4)-beta-D-GlcNAc}-L-asparaginyl-[protein] + UDP + H(+). It functions in the pathway protein modification; protein glycosylation. Its function is as follows. Catalyzes the addition of N-acetylglucosamine (GlcNAc) in beta 1-6 linkage to the alpha-linked mannose of biantennary N-linked oligosaccharides. Catalyzes an important step in the biosynthesis of branched, complex-type N-glycans, such as those found on EGFR, TGFR (TGF-beta receptor) and CDH2. Via its role in the biosynthesis of complex N-glycans, plays an important role in the activation of cellular signaling pathways, reorganization of the actin cytoskeleton, cell-cell adhesion and cell migration. MGAT5-dependent EGFR N-glycosylation enhances the interaction between EGFR and LGALS3 and thereby prevents rapid EGFR endocytosis and prolongs EGFR signaling. Required for efficient interaction between TGFB1 and its receptor. Enhances activation of intracellular signaling pathways by several types of growth factors, including FGF2, PDGF, IGF, TGFB1 and EGF. MGAT5-dependent CDH2 N-glycosylation inhibits CDH2-mediated homotypic cell-cell adhesion and contributes to the regulation of downstream signaling pathways. Promotes cell migration. Contributes to the regulation of the inflammatory response. MGAT5-dependent TCR N-glycosylation enhances the interaction between TCR and LGALS3, limits agonist-induced TCR clustering, and thereby dampens TCR-mediated responses to antigens. Required for normal leukocyte evasation and accumulation at sites of inflammation. Inhibits attachment of monocytes to the vascular endothelium and subsequent monocyte diapedesis. In terms of biological role, promotes proliferation of umbilical vein endothelial cells and angiogenesis, at least in part by promoting the release of the growth factor FGF2 from the extracellular matrix. The chain is Alpha-1,6-mannosylglycoprotein 6-beta-N-acetylglucosaminyltransferase A (Mgat5) from Rattus norvegicus (Rat).